Here is a 162-residue protein sequence, read N- to C-terminus: uncharacterized protein (162 aa).

3 helical membrane passes run leucine 7–leucine 27, leucine 51–glycine 71, and threonine 134–glycine 154.

Belongs to the DedA family.

The protein resides in the cell membrane. This is an uncharacterized protein from Bacillus subtilis (strain 168).